The sequence spans 679 residues: Glycine--tRNA ligase beta subunit (679 aa).

The protein belongs to the class-II aminoacyl-tRNA synthetase family. As to quaternary structure, tetramer of two alpha and two beta subunits.

The protein localises to the cytoplasm. It catalyses the reaction tRNA(Gly) + glycine + ATP = glycyl-tRNA(Gly) + AMP + diphosphate. This is Glycine--tRNA ligase beta subunit from Streptococcus pyogenes serotype M1.